The following is a 5005-amino-acid chain: Bridge-like lipid transfer protein family member 1 (5005 aa).

The chain crosses the membrane as a helical span at residues 27–47; sequence VVWLLVATILSCGWIIYLTYY. Disordered stretches follow at residues 692-718 and 1205-1314; these read RPAQ…PSEL and KSVG…ASVC. Over residues 708 to 718 the composition is skewed to pro residues; sequence SPRPPVDPSEL. Over residues 1205 to 1215 the composition is skewed to basic and acidic residues; it reads KSVGIEGERKT. Low complexity predominate over residues 1226 to 1240; it reads SHSSSSSSEENSSSS. The segment covering 1248–1275 has biased composition (basic and acidic residues); that stretch reads GEKESPSSAADDHSVQKDLLHSARRDDG. Residues 1278–1303 are compositionally biased toward polar residues; the sequence is SVPTEISGTSPVSPNTQDKSVGQSPL. Residues S1301, S1305, and S1323 each carry the phosphoserine modification. The residue at position 1325 (T1325) is a Phosphothreonine. Disordered stretches follow at residues 1343–1376, 1399–1425, 1521–1544, and 1676–1698; these read SDVS…SNSF, EEFE…QMQQ, TNKR…SEES, and FSEN…MIGT. A phosphoserine mark is found at S1355 and S1406. The span at 1521 to 1530 shows a compositional bias: basic residues; that stretch reads TNKRTSKSSL. Over residues 1684–1693 the composition is skewed to basic and acidic residues; it reads QDIRGTKTEH. 2 positions are modified to phosphoserine: S1805 and S1808. Disordered regions lie at residues 1927 to 1991, 2165 to 2192, 2265 to 2288, 2367 to 2387, 2400 to 2420, and 2598 to 2677; these read RGGV…PLMP, PAQP…GGLQ, TSGD…KESP, ESPV…PNLP, SSDQ…QDDV, and TAGS…KDVV. 2 stretches are compositionally biased toward polar residues: residues 1931–1948 and 1959–1971; these read LTSN…YNTD and TSPS…NSVS. Composition is skewed to polar residues over residues 2367-2379, 2400-2418, and 2598-2608; these read ESPV…NSLP, SSDQ…TSQD, and TAGSASPTPTF. Phosphoserine is present on residues S2601 and S2603. The segment covering 2619–2638 has biased composition (low complexity); that stretch reads SDFSRSSRGSLNGGNRVNNA. Positions 2643–2665 are enriched in basic and acidic residues; sequence ANNENNKKESRNKNSLGRSERRT. A Phosphoserine modification is found at S2755. Residues 2928–2967 are disordered; that stretch reads RQPSTAPQPMKEDIATPLPSEKTPTSVNQTPIETNEFPQL. Over residues 2949-2964 the composition is skewed to polar residues; the sequence is KTPTSVNQTPIETNEF. S3562, E3577, and S3653 each carry phosphoserine. Disordered stretches follow at residues 3614-3662, 3686-3744, 3821-3843, 3935-3954, 4089-4145, and 4325-4396; these read YSRS…TFNI, SSNS…ERFY, RRSY…KKFQ, KTNT…KGKG, TTYP…SSSS, and QSAS…ASQQ. Over residues 3686–3711 the composition is skewed to polar residues; the sequence is SSNSEGSCSVFSSPKTTGGFSPSVPF. The segment covering 3727–3736 has biased composition (acidic residues); that stretch reads EDSEKDEKDE. Residues 3821–3837 show a composition bias toward basic and acidic residues; that stretch reads RRSYDRSSRSLDQDSPS. Over residues 4097–4112 the composition is skewed to polar residues; sequence SPGSNAPQTGAKTSAS. Over residues 4117 to 4145 the composition is skewed to low complexity; it reads PGSSGLGSPLGRSRHSSSQSDLTGSSSSS. S4124 is modified (phosphoserine). Polar residues predominate over residues 4325–4358; sequence QSASFTHMPQSPNVFNEHMTNNTMSPGTAAQSLK. The span at 4359-4372 shows a compositional bias: low complexity; it reads SPASIRSRSVSDSS. Residues 4381-4396 show a composition bias toward polar residues; that stretch reads KTSTPVNKSNKAASQQ.

As to expression, highly expressed in testis and ovary. Weakly or not expressed in other tissues.

It localises to the cell membrane. The protein resides in the endoplasmic reticulum membrane. The protein localises to the mitochondrion membrane. Functionally, tube-forming lipid transport protein which provides phosphatidylethanolamine for glycosylphosphatidylinositol (GPI) anchor synthesis in the endoplasmic reticulum. Plays a role in endosomal trafficking and endosome recycling. Also involved in the actin cytoskeleton and cilia structural dynamics. Acts as a regulator of phagocytosis. The chain is Bridge-like lipid transfer protein family member 1 (Bltp1) from Mus musculus (Mouse).